We begin with the raw amino-acid sequence, 398 residues long: Acetate kinase (398 aa).

Asn10 contacts Mg(2+). Position 17 (Lys17) interacts with ATP. Arg91 serves as a coordination point for substrate. Asp148 (proton donor/acceptor) is an active-site residue. ATP is bound by residues 208–212 (HLGNG), 283–285 (DCR), and 331–335 (GIGEN). Glu385 lines the Mg(2+) pocket.

This sequence belongs to the acetokinase family. In terms of assembly, homodimer. The cofactor is Mg(2+). Mn(2+) serves as cofactor.

Its subcellular location is the cytoplasm. It catalyses the reaction acetate + ATP = acetyl phosphate + ADP. The protein operates within metabolic intermediate biosynthesis; acetyl-CoA biosynthesis; acetyl-CoA from acetate: step 1/2. In terms of biological role, catalyzes the formation of acetyl phosphate from acetate and ATP. Can also catalyze the reverse reaction. In Shewanella pealeana (strain ATCC 700345 / ANG-SQ1), this protein is Acetate kinase.